Consider the following 243-residue polypeptide: Transmembrane protein 174 (243 aa).

2 consecutive transmembrane segments (helical) span residues 40-60 (LLFS…MGWI) and 73-93 (LLGP…VCKF). The tract at residues 205–229 (AGHDRPSSDADQLEGTQMGEEERVC) is disordered.

As to quaternary structure, interacts with SLC34A1; regulates SLC34A1 internalization by PTH and FGF23.

Its subcellular location is the endoplasmic reticulum membrane. The protein resides in the apical cell membrane. Regulator of plasma phosphate homeostasis. Decreases serum inorganic phosphate (Pi) uptake by regulating the sodium-phosphate cotransporter SLC34A1 trafficking by PTH and FGF23 in the kidney. The chain is Transmembrane protein 174 (Tmem174) from Rattus norvegicus (Rat).